A 189-amino-acid chain; its full sequence is 3-isopropylmalate dehydratase small subunit (189 aa).

The protein belongs to the LeuD family. LeuD type 1 subfamily. Heterodimer of LeuC and LeuD.

It catalyses the reaction (2R,3S)-3-isopropylmalate = (2S)-2-isopropylmalate. The protein operates within amino-acid biosynthesis; L-leucine biosynthesis; L-leucine from 3-methyl-2-oxobutanoate: step 2/4. Catalyzes the isomerization between 2-isopropylmalate and 3-isopropylmalate, via the formation of 2-isopropylmaleate. This Francisella tularensis subsp. holarctica (strain FTNF002-00 / FTA) protein is 3-isopropylmalate dehydratase small subunit.